Here is a 117-residue protein sequence, read N- to C-terminus: MARVTVEDCVDKVPNRFELVMLAAHRAREISAGAELTVDRDNDKNPVVSLREIAEETQSADALRERLIESNQSQIEVDEPEEDSMALLMGGEADKPQEDDMSEEKLLRALMEAQGQG.

Belongs to the RNA polymerase subunit omega family. As to quaternary structure, the RNAP catalytic core consists of 2 alpha, 1 beta, 1 beta' and 1 omega subunit. When a sigma factor is associated with the core the holoenzyme is formed, which can initiate transcription.

It carries out the reaction RNA(n) + a ribonucleoside 5'-triphosphate = RNA(n+1) + diphosphate. Promotes RNA polymerase assembly. Latches the N- and C-terminal regions of the beta' subunit thereby facilitating its interaction with the beta and alpha subunits. The protein is DNA-directed RNA polymerase subunit omega of Ruegeria sp. (strain TM1040) (Silicibacter sp.).